The chain runs to 352 residues: Protein NDRG4 (352 aa).

Phosphoserine occurs at positions 298, 317, and 323. Low complexity predominate over residues 314–323 (RTASLTSASS). Residues 314 to 352 (RTASLTSASSVDGSRPQACTHSESSEGLGQVNHTMEVSC) are disordered. Residues 330-352 (QACTHSESSEGLGQVNHTMEVSC) show a composition bias toward polar residues.

This sequence belongs to the NDRG family. Phosphorylated in an aortic smooth muscle cell line, following PDGF treatment. As to expression, expressed predominantly in brain and heart (at protein level). In the brain, detected in astrocytes. Isoform 1 and isoform 2 are only expressed in brain. Isoform 3 is expressed in both heart and brain. Up-regulated in glioblastoma multiforme cells.

The protein resides in the cytoplasm. Its subcellular location is the cytosol. Contributes to the maintenance of intracerebral BDNF levels within the normal range, which is necessary for the preservation of spatial learning and the resistance to neuronal cell death caused by ischemic stress. May enhance growth factor-induced ERK1 and ERK2 phosphorylation, including that induced by PDGF and FGF. May attenuate NGF-promoted ELK1 phosphorylation in a microtubule-dependent manner. This Homo sapiens (Human) protein is Protein NDRG4 (NDRG4).